Reading from the N-terminus, the 316-residue chain is Ferrochelatase (316 aa).

Residues His188 and Glu269 each coordinate Fe cation.

Belongs to the ferrochelatase family.

The protein resides in the cytoplasm. It carries out the reaction heme b + 2 H(+) = protoporphyrin IX + Fe(2+). The protein operates within porphyrin-containing compound metabolism; protoheme biosynthesis; protoheme from protoporphyrin-IX: step 1/1. Functionally, catalyzes the ferrous insertion into protoporphyrin IX. The sequence is that of Ferrochelatase from Wolinella succinogenes (strain ATCC 29543 / DSM 1740 / CCUG 13145 / JCM 31913 / LMG 7466 / NCTC 11488 / FDC 602W) (Vibrio succinogenes).